Consider the following 187-residue polypeptide: HTH-type transcriptional repressor Rv1474c (187 aa).

The 61-residue stretch at 10 to 70 folds into the HTH tetR-type domain; the sequence is AARRRQILDG…ALAREDTERM (61 aa). Residues 33 to 52 constitute a DNA-binding region (H-T-H motif); that stretch reads TVRRLEQAIGMSRGAIFHHF.

As to quaternary structure, homodimer.

Its activity is regulated as follows. Binding to DNA is abolished in the presence of high concentration of iron. Specifically binds to tetracycline, which leads to a conformational change in the structure of the protein and inhibits the DNA binding activity. Functionally, represses the expression of the aconitase gene acn and its own expression, in an iron-responsive manner. Binds to the inverted repeat element present in the upstream region of acn (Rv1475c)-Rv1474c operon. Preferentially binds to major groove of the DNA. This chain is HTH-type transcriptional repressor Rv1474c, found in Mycobacterium tuberculosis (strain ATCC 25618 / H37Rv).